A 622-amino-acid chain; its full sequence is 1-deoxy-D-xylulose-5-phosphate synthase (622 aa).

Residues H80 and 121 to 123 (GHS) each bind thiamine diphosphate. Position 152 (D152) interacts with Mg(2+). Thiamine diphosphate-binding positions include 153–154 (GA), N181, Y288, and E370. A Mg(2+)-binding site is contributed by N181.

Belongs to the transketolase family. DXPS subfamily. As to quaternary structure, homodimer. The cofactor is Mg(2+). Thiamine diphosphate serves as cofactor.

It catalyses the reaction D-glyceraldehyde 3-phosphate + pyruvate + H(+) = 1-deoxy-D-xylulose 5-phosphate + CO2. It participates in metabolic intermediate biosynthesis; 1-deoxy-D-xylulose 5-phosphate biosynthesis; 1-deoxy-D-xylulose 5-phosphate from D-glyceraldehyde 3-phosphate and pyruvate: step 1/1. Functionally, catalyzes the acyloin condensation reaction between C atoms 2 and 3 of pyruvate and glyceraldehyde 3-phosphate to yield 1-deoxy-D-xylulose-5-phosphate (DXP). In Hamiltonella defensa subsp. Acyrthosiphon pisum (strain 5AT), this protein is 1-deoxy-D-xylulose-5-phosphate synthase.